A 590-amino-acid polypeptide reads, in one-letter code: Regulatory solute carrier protein family 1 member 1 (590 aa).

Disordered stretches follow at residues 1 to 116 (MSSS…TQGL), 144 to 234 (EEGW…PDSE), 277 to 331 (SPSS…AEES), and 359 to 466 (EEVT…SHRT). The segment covering 16–35 (SSGQSPEAGNPTSLARSVSA) has biased composition (polar residues). A compositionally biased stretch (low complexity) spans 78–91 (SPCAAAAAPSSAMP). Positions 150–161 (ENQNPSQVNDLQ) are enriched in polar residues. Basic and acidic residues-rich tracts occupy residues 162 to 179 (QHQEPENARHEAGPRDAP) and 188 to 203 (PGERQQKHEVADREAT). Low complexity predominate over residues 313–331 (SSSSVCGSSQPPAESAEES). Residues 362–376 (TCQSEGTAWGQTRVN) are compositionally biased toward polar residues. Basic and acidic residues-rich tracts occupy residues 380 to 395 (RWTESERRTQDEDRPQ) and 404 to 420 (VKTEKLTDASPDTRIED). Residues 451–465 (SVTVTSAETSNQSHR) are compositionally biased toward polar residues. In terms of domain architecture, UBA spans 544 to 584 (GFPAADIDRILRAGFTLQEALGALHRVGGNADLALLVLLAK).

Interacts with YRDC. As to expression, highly expressed in renal outer medulla, renal inner medulla, duodenum, ileum and jejunum. Moderately expressed in renal outer cortex, renal papilla, brain and liver.

Its subcellular location is the cell membrane. It localises to the nucleus. The protein resides in the golgi apparatus. It is found in the trans-Golgi network. Mediates transcriptional and post-transcriptional regulation of SLC5A1. Inhibits a dynamin and PKC-dependent exocytotic pathway of SLC5A1. Also involved in transcriptional regulation of SLC22A2. Exhibits glucose-dependent, short-term inhibition of SLC5A1 and SLC22A2 by inhibiting the release of vesicles from the trans-Golgi network. This chain is Regulatory solute carrier protein family 1 member 1 (RSC1A1), found in Oryctolagus cuniculus (Rabbit).